A 129-amino-acid polypeptide reads, in one-letter code: Small ribosomal subunit protein uS9 (129 aa).

The protein belongs to the universal ribosomal protein uS9 family.

The protein is Small ribosomal subunit protein uS9 of Pelodictyon phaeoclathratiforme (strain DSM 5477 / BU-1).